The sequence spans 344 residues: Sulfate/thiosulfate import ATP-binding protein CysA (344 aa).

The 231-residue stretch at 3–233 (ILIDNVSKNF…PESAFVMSFL (231 aa)) folds into the ABC transporter domain. 35-42 (GPSGCGKS) is an ATP binding site.

This sequence belongs to the ABC transporter superfamily. Sulfate/tungstate importer (TC 3.A.1.6) family. The complex is composed of two ATP-binding proteins (CysA), two transmembrane proteins (CysT and CysW) and a solute-binding protein (CysP).

Its subcellular location is the cell inner membrane. The enzyme catalyses sulfate(out) + ATP + H2O = sulfate(in) + ADP + phosphate + H(+). The catalysed reaction is thiosulfate(out) + ATP + H2O = thiosulfate(in) + ADP + phosphate + H(+). Functionally, part of the ABC transporter complex CysAWTP involved in sulfate/thiosulfate import. Responsible for energy coupling to the transport system. This chain is Sulfate/thiosulfate import ATP-binding protein CysA, found in Gloeobacter violaceus (strain ATCC 29082 / PCC 7421).